Consider the following 348-residue polypeptide: Putative transport protein HI_0338 (348 aa).

9 helical membrane passes run 7-27, 28-48, 60-80, 139-159, 196-216, 223-243, 245-265, 267-287, and 296-316; these read LHRTLLGIAAVIIILAGVKLA, AEIVVPFLLSLFIAIICSPII, LAITLLFVLISLVFFFLVGLI, VLLNFSGVVSNVFVLVLVVIF, VIGYLGIKSITSLLTGVGVFI, VQYAILWATLSFLLNYIPNIG, IIAAIPIIVQALLLNGFGIGF, VAIGVIAINMVVGNIIEPKMM, and LVVFLSLLFWGWLLGTVGMLL.

This sequence belongs to the autoinducer-2 exporter (AI-2E) (TC 2.A.86) family.

The protein resides in the cell membrane. This is Putative transport protein HI_0338 from Haemophilus influenzae (strain ATCC 51907 / DSM 11121 / KW20 / Rd).